Reading from the N-terminus, the 118-residue chain is Large ribosomal subunit protein bL20 (118 aa).

It belongs to the bacterial ribosomal protein bL20 family.

Its function is as follows. Binds directly to 23S ribosomal RNA and is necessary for the in vitro assembly process of the 50S ribosomal subunit. It is not involved in the protein synthesizing functions of that subunit. The protein is Large ribosomal subunit protein bL20 of Cyanothece sp. (strain PCC 7425 / ATCC 29141).